We begin with the raw amino-acid sequence, 199 residues long: Putative lectin L633 (199 aa).

The first 25 residues, M1–N25, serve as a signal peptide directing secretion. The segment covering C35–D48 has biased composition (polar residues). The interval C35–N74 is disordered. Residues Q49–P73 are compositionally biased toward low complexity. The region spanning E84–R195 is the Bulb-type lectin domain. N-linked (GlcNAc...) asparagine; by host glycosylation is present at N121.

It localises to the secreted. The sequence is that of Putative lectin L633 from Acanthamoeba polyphaga (Amoeba).